We begin with the raw amino-acid sequence, 1693 residues long: Latrophilin Cirl (1693 aa).

Residues 1–774 (MVLQGAKQRL…LFTMFDGNMR (774 aa)) lie on the Extracellular side of the membrane. Residues 30–119 (ACEGKKLTIE…KYLEAHYQCV (90 aa)) form the SUEL-type lectin domain. Asn147, Asn260, Asn306, and Asn345 each carry an N-linked (GlcNAc...) asparagine glycan. The tract at residues 190-309 (PPATHATPPG…GPSVSSNGSA (120 aa)) is disordered. Polar residues-rich tracts occupy residues 259 to 269 (SNATAPSNTRI) and 287 to 309 (KSSPNRTPGTAASGPSVSSNGSA). The segment at 379–406 (SFDEDDEEMAGTSTTTPMSTSGDCLHNS) is disordered. Over residues 390-399 (TSTTTPMSTS) the composition is skewed to low complexity. N-linked (GlcNAc...) asparagine glycans are attached at residues Asn405, Asn662, Asn710, and Asn737. The region spanning 568-761 (RSVVQKVKNI…AILMDVVDEH (194 aa)) is the GAIN-B domain. Disulfide bonds link Cys716-Cys743 and Cys731-Cys745. The interval 716 to 761 (CVFWNYIDHAWSANGCSLESTNRTHSVCSCNHLTNFAILMDVVDEH) is GPS. Residues 775–795 (IFIYISIAICVVFIVIALLTL) traverse the membrane as a helical segment. At 796 to 808 (KLFNGVFVKSART) the chain is on the cytoplasmic side. A helical membrane pass occupies residues 809 to 829 (SIYINIYICLLAIELLFLLGI). The Extracellular portion of the chain corresponds to 830 to 835 (EQTETS). A helical transmembrane segment spans residues 836-856 (IFCGFITVFLHCAILSGTSWF). Topologically, residues 857 to 882 (CYEAFHSYSTLTSDELLLEVDQTPKV) are cytoplasmic. The chain crosses the membrane as a helical span at residues 883–903 (NCYYLLSYGLSLSVVAISLVI). At 904–927 (NPSTYTQNDYCVLMEANAVFYATF) the chain is on the extracellular side. The helical transmembrane segment at 928-948 (VAPVLIFFMAAIGYTFLSWII) threads the bilayer. The Cytoplasmic segment spans residues 949 to 975 (MCRKSRTGLKTKEHTRLATVRFDIRCS). A helical transmembrane segment spans residues 976-996 (FVFFLLLSAVWCSAYFYLRGA). The Extracellular portion of the chain corresponds to 997 to 1003 (KMDEDVT). The chain crosses the membrane as a helical span at residues 1004-1024 (GIYGYNFICFNTLLGLYIFVF). Residues 1025 to 1693 (HCIQNEKIRR…VRCYLEPLAK (669 aa)) are Cytoplasmic-facing. The tract at residues 1089 to 1109 (PLGTNDDAHDEQQQQQHMSAT) is disordered. Residues Ser1165, Ser1256, and Ser1263 each carry the phosphoserine modification. Disordered stretches follow at residues 1237–1264 (KPNSQHGKKKRGGVGAIPASPSGSLHSR), 1279–1362 (KTKP…APPP), 1450–1529 (SRYG…LPPQ), and 1596–1678 (SMRG…SAML). Residues 1307 to 1323 (QQQQQLRQQRQQQQQQL) show a composition bias toward low complexity. Residues Ser1324 and Ser1325 each carry the phosphoserine modification. Low complexity predominate over residues 1337–1357 (LHLQHQQQQQQQRRAGGQQQL). The span at 1464-1475 (RNQQQQQHSLAQ) shows a compositional bias: polar residues. Acidic residues-rich tracts occupy residues 1485-1498 (DEDDDEDEDDEETT) and 1508-1521 (CDEEEEDEESDMED). Low complexity predominate over residues 1640-1663 (QQLQKLSPQSTTSSSSHTSHSNPH).

It belongs to the G-protein coupled receptor 2 family. LN-TM7 subfamily. Forms a heterodimer, consisting of a large extracellular region non-covalently linked to a seven-transmembrane moiety. Proteolytically cleaved into 2 subunits, an extracellular subunit and a seven-transmembrane subunit.

Its subcellular location is the cell membrane. The chain is Latrophilin Cirl from Drosophila pseudoobscura pseudoobscura (Fruit fly).